Consider the following 277-residue polypeptide: Bifunctional protein FolD 1 (277 aa).

Residues 162-164 (GDS) and Ser187 contribute to the NADP(+) site.

Belongs to the tetrahydrofolate dehydrogenase/cyclohydrolase family. Homodimer.

It carries out the reaction (6R)-5,10-methylene-5,6,7,8-tetrahydrofolate + NADP(+) = (6R)-5,10-methenyltetrahydrofolate + NADPH. The catalysed reaction is (6R)-5,10-methenyltetrahydrofolate + H2O = (6R)-10-formyltetrahydrofolate + H(+). It participates in one-carbon metabolism; tetrahydrofolate interconversion. Functionally, catalyzes the oxidation of 5,10-methylenetetrahydrofolate to 5,10-methenyltetrahydrofolate and then the hydrolysis of 5,10-methenyltetrahydrofolate to 10-formyltetrahydrofolate. The sequence is that of Bifunctional protein FolD 1 from Syntrophomonas wolfei subsp. wolfei (strain DSM 2245B / Goettingen).